A 433-amino-acid polypeptide reads, in one-letter code: Glutamate-1-semialdehyde 2,1-aminomutase (433 aa).

Position 273 is an N6-(pyridoxal phosphate)lysine (lysine 273).

Belongs to the class-III pyridoxal-phosphate-dependent aminotransferase family. HemL subfamily. In terms of assembly, homodimer. It depends on pyridoxal 5'-phosphate as a cofactor.

It is found in the cytoplasm. The enzyme catalyses (S)-4-amino-5-oxopentanoate = 5-aminolevulinate. It functions in the pathway porphyrin-containing compound metabolism; protoporphyrin-IX biosynthesis; 5-aminolevulinate from L-glutamyl-tRNA(Glu): step 2/2. The protein is Glutamate-1-semialdehyde 2,1-aminomutase of Polynucleobacter necessarius subsp. necessarius (strain STIR1).